Consider the following 202-residue polypeptide: NADH-quinone oxidoreductase subunit B 2 (202 aa).

Positions 38, 39, 104, and 133 each coordinate [4Fe-4S] cluster.

It belongs to the complex I 20 kDa subunit family. In terms of assembly, NDH-1 is composed of 14 different subunits. Subunits NuoB, C, D, E, F, and G constitute the peripheral sector of the complex. [4Fe-4S] cluster serves as cofactor.

The protein localises to the cell inner membrane. It catalyses the reaction a quinone + NADH + 5 H(+)(in) = a quinol + NAD(+) + 4 H(+)(out). Its function is as follows. NDH-1 shuttles electrons from NADH, via FMN and iron-sulfur (Fe-S) centers, to quinones in the respiratory chain. The immediate electron acceptor for the enzyme in this species is believed to be ubiquinone. Couples the redox reaction to proton translocation (for every two electrons transferred, four hydrogen ions are translocated across the cytoplasmic membrane), and thus conserves the redox energy in a proton gradient. This is NADH-quinone oxidoreductase subunit B 2 from Koribacter versatilis (strain Ellin345).